The primary structure comprises 269 residues: Formamidopyrimidine-DNA glycosylase (269 aa).

The active-site Schiff-base intermediate with DNA is Pro2. Glu3 serves as the catalytic Proton donor. Lys57 functions as the Proton donor; for beta-elimination activity in the catalytic mechanism. His90, Arg109, and Lys150 together coordinate DNA. The FPG-type zinc finger occupies 235–269; that stretch reads QVYGREGEPCRVCGTPILAGKHAQRRTYWCRRCQK. Arg259 acts as the Proton donor; for delta-elimination activity in catalysis.

The protein belongs to the FPG family. Monomer. Zn(2+) is required as a cofactor.

The enzyme catalyses Hydrolysis of DNA containing ring-opened 7-methylguanine residues, releasing 2,6-diamino-4-hydroxy-5-(N-methyl)formamidopyrimidine.. It catalyses the reaction 2'-deoxyribonucleotide-(2'-deoxyribose 5'-phosphate)-2'-deoxyribonucleotide-DNA = a 3'-end 2'-deoxyribonucleotide-(2,3-dehydro-2,3-deoxyribose 5'-phosphate)-DNA + a 5'-end 5'-phospho-2'-deoxyribonucleoside-DNA + H(+). Functionally, involved in base excision repair of DNA damaged by oxidation or by mutagenic agents. Acts as a DNA glycosylase that recognizes and removes damaged bases. Has a preference for oxidized purines, such as 7,8-dihydro-8-oxoguanine (8-oxoG). Has AP (apurinic/apyrimidinic) lyase activity and introduces nicks in the DNA strand. Cleaves the DNA backbone by beta-delta elimination to generate a single-strand break at the site of the removed base with both 3'- and 5'-phosphates. This is Formamidopyrimidine-DNA glycosylase from Cronobacter sakazakii (strain ATCC BAA-894) (Enterobacter sakazakii).